A 291-amino-acid chain; its full sequence is Undecaprenyl-diphosphatase (291 aa).

Helical transmembrane passes span 1-21, 48-68, 102-122, 126-146, 162-182, 203-223, 231-251, and 267-287; these read MFII…LTEF, SAFT…AWVF, LHVL…DDFI, LFSV…MIIA, ISYF…WPGF, SDFT…LSLL, IADI…GLIA, and FAIY…GFGI.

The protein belongs to the UppP family.

It is found in the cell membrane. It catalyses the reaction di-trans,octa-cis-undecaprenyl diphosphate + H2O = di-trans,octa-cis-undecaprenyl phosphate + phosphate + H(+). Catalyzes the dephosphorylation of undecaprenyl diphosphate (UPP). Confers resistance to bacitracin. This Staphylococcus aureus (strain USA300) protein is Undecaprenyl-diphosphatase.